We begin with the raw amino-acid sequence, 190 residues long: Holliday junction branch migration complex subunit RuvA (190 aa).

Positions 1–64 (MIGRITGTLI…EDAHILYGFA (64 aa)) are domain I. The interval 65–137 (TAAERGAFRE…MRGKLGADIG (73 aa)) is domain II. The interval 137 to 141 (GATAH) is flexible linker. The tract at residues 142 to 190 (AVPDSQTDILNALLALGYSDKESQAALKKLPEGTGVSEGIRLALKALVR) is domain III.

Belongs to the RuvA family. As to quaternary structure, homotetramer. Forms an RuvA(8)-RuvB(12)-Holliday junction (HJ) complex. HJ DNA is sandwiched between 2 RuvA tetramers; dsDNA enters through RuvA and exits via RuvB. An RuvB hexamer assembles on each DNA strand where it exits the tetramer. Each RuvB hexamer is contacted by two RuvA subunits (via domain III) on 2 adjacent RuvB subunits; this complex drives branch migration. In the full resolvosome a probable DNA-RuvA(4)-RuvB(12)-RuvC(2) complex forms which resolves the HJ.

The protein localises to the cytoplasm. In terms of biological role, the RuvA-RuvB-RuvC complex processes Holliday junction (HJ) DNA during genetic recombination and DNA repair, while the RuvA-RuvB complex plays an important role in the rescue of blocked DNA replication forks via replication fork reversal (RFR). RuvA specifically binds to HJ cruciform DNA, conferring on it an open structure. The RuvB hexamer acts as an ATP-dependent pump, pulling dsDNA into and through the RuvAB complex. HJ branch migration allows RuvC to scan DNA until it finds its consensus sequence, where it cleaves and resolves the cruciform DNA. This is Holliday junction branch migration complex subunit RuvA from Bordetella petrii (strain ATCC BAA-461 / DSM 12804 / CCUG 43448).